We begin with the raw amino-acid sequence, 619 residues long: Protein CPn_1016/CP_0837/CPj1016/CpB1054 (619 aa).

The segment at 591–619 (NAKKSEEQTSPQETPEVIRVSYPTTTSAL) is disordered.

This sequence belongs to the chlamydial CPn_1016/CT_858/TC_0248 family.

The protein is Protein CPn_1016/CP_0837/CPj1016/CpB1054 of Chlamydia pneumoniae (Chlamydophila pneumoniae).